A 265-amino-acid polypeptide reads, in one-letter code: Small ribosomal subunit protein uS5 (265 aa).

Residues 1–15 (MADTQPAQEAPAADA) show a composition bias toward low complexity. The disordered stretch occupies residues 1 to 44 (MADTQPAQEAPAADAPRAERNFGRGRGGRGGRGRGRGGPGEEKE). A compositionally biased stretch (basic residues) spans 26 to 35 (RGGRGGRGRG). The 64-residue stretch at 88-151 (LHDEMMKIYP…IAAKLNIVPV (64 aa)) folds into the S5 DRBM domain. Positions 245 to 265 (TEPSRDPTDEHGELLAEMTTA) are disordered. A compositionally biased stretch (basic and acidic residues) spans 246 to 258 (EPSRDPTDEHGEL).

It belongs to the universal ribosomal protein uS5 family.

In terms of biological role, component of the ribosome, a large ribonucleoprotein complex responsible for the synthesis of proteins in the cell. The small ribosomal subunit (SSU) binds messenger RNAs (mRNAs) and translates the encoded message by selecting cognate aminoacyl-transfer RNA (tRNA) molecules. The large subunit (LSU) contains the ribosomal catalytic site termed the peptidyl transferase center (PTC), which catalyzes the formation of peptide bonds, thereby polymerizing the amino acids delivered by tRNAs into a polypeptide chain. The nascent polypeptides leave the ribosome through a tunnel in the LSU and interact with protein factors that function in enzymatic processing, targeting, and the membrane insertion of nascent chains at the exit of the ribosomal tunnel. Plays a role in the assembly and function of the 40S ribosomal subunit. Mutations in this protein affects the control of translational fidelity. Involved in nucleolar processing of pre-18S ribosomal RNA and ribosome assembly. The protein is Small ribosomal subunit protein uS5 of Leishmania amazonensis.